Consider the following 286-residue polypeptide: 1D-myo-inositol 2-acetamido-2-deoxy-alpha-D-glucopyranoside deacetylase (286 aa).

Zn(2+) is bound by residues His-12, Asp-15, and His-147.

The protein belongs to the MshB deacetylase family. Zn(2+) serves as cofactor.

It carries out the reaction 1D-myo-inositol 2-acetamido-2-deoxy-alpha-D-glucopyranoside + H2O = 1D-myo-inositol 2-amino-2-deoxy-alpha-D-glucopyranoside + acetate. Functionally, catalyzes the deacetylation of 1D-myo-inositol 2-acetamido-2-deoxy-alpha-D-glucopyranoside (GlcNAc-Ins) in the mycothiol biosynthesis pathway. This chain is 1D-myo-inositol 2-acetamido-2-deoxy-alpha-D-glucopyranoside deacetylase, found in Thermobifida fusca (strain YX).